Reading from the N-terminus, the 509-residue chain is Probable cytochrome P450 4ac3 (509 aa).

Cysteine 454 contributes to the heme binding site.

This sequence belongs to the cytochrome P450 family. The cofactor is heme.

It localises to the endoplasmic reticulum membrane. The protein localises to the microsome membrane. Functionally, may be involved in the metabolism of insect hormones and in the breakdown of synthetic insecticides. The protein is Probable cytochrome P450 4ac3 (Cyp4ac3) of Drosophila melanogaster (Fruit fly).